The chain runs to 234 residues: Probable Ufm1-specific protease 1 (234 aa).

Residues cysteine 70, aspartate 194, and histidine 196 contribute to the active site.

The protein belongs to the peptidase C78 family.

In terms of biological role, thiol protease which recognizes and hydrolyzes the peptide bond at the C-terminal Gly of UFM1, a ubiquitin-like modifier protein bound to a number of target proteins. The chain is Probable Ufm1-specific protease 1 from Drosophila melanogaster (Fruit fly).